The chain runs to 428 residues: MSNIVIVGAQWGDEGKGKIADTLAEKADLVVRYQGGNNAGHTLVVNGKKTFLHLIPSGVLRQHTKCVIGHGVVLDPVALDEEITRLQAKGIAISAENLFVSESCTIITSYHKLLDAVRESNTSEKIGTTGKGIGPAYEDKVSRKGIKFKHLFDKDLLRSRLAISLAEKETLFRDLYKVEYPTLEQEFDKLFALGQKLKQYAADTFSIIDQAIAAGKNVVYEGAQGVLLDVDYGTYPFVTSSNTSVAGVYSGATTAGHGLDHVIGITKAYTTRVGEGPFPTELFDDVGKFIQHKGGEIGVTTGRIRRCGWLDLPLLKYSAKCSNLTSIALTKVDVLSDMDTLKVCIGYKYEGKEIYCAYPGIDLYKVEPILVEMEPFSIDETVTKDNMPAALKTYLKTIENHVGIPISSLAYGPSREQILFFEDYFKKG.

GTP contacts are provided by residues 12–18 (GDEGKGK) and 40–42 (GHT). Asp13 functions as the Proton acceptor in the catalytic mechanism. Mg(2+) contacts are provided by Asp13 and Gly40. Residues 13 to 16 (DEGK), 38 to 41 (NAGH), Thr129, Arg143, Gln224, Thr239, and Arg303 contribute to the IMP site. The active-site Proton donor is His41. Residue 299-305 (VTTGRIR) participates in substrate binding. GTP-binding positions include Arg305, 331–333 (KVD), and 410–412 (AYG).

Belongs to the adenylosuccinate synthetase family. Homodimer. Mg(2+) is required as a cofactor.

It localises to the cytoplasm. It catalyses the reaction IMP + L-aspartate + GTP = N(6)-(1,2-dicarboxyethyl)-AMP + GDP + phosphate + 2 H(+). It participates in purine metabolism; AMP biosynthesis via de novo pathway; AMP from IMP: step 1/2. Plays an important role in the de novo pathway of purine nucleotide biosynthesis. Catalyzes the first committed step in the biosynthesis of AMP from IMP. In Francisella tularensis subsp. tularensis (strain FSC 198), this protein is Adenylosuccinate synthetase.